A 595-amino-acid chain; its full sequence is Isoprene synthase, chloroplastic (595 aa).

The transit peptide at 1 to 37 (MATELLCLHRPISLTHKLFRNPLPKVIQATPLTLKLR) directs the protein to the chloroplast. Position 345 (Asp-345) interacts with dimethylallyl diphosphate. Mg(2+)-binding residues include Asp-345 and Asp-349. A DDXXD motif motif is present at residues 345-349 (DDIYD). The dimethylallyl diphosphate site is built by Glu-423, Arg-486, and Asn-489. Mg(2+) contacts are provided by Asn-489, Ser-493, and Glu-497.

Belongs to the terpene synthase family. Tpsb subfamily. In terms of assembly, homodimer. It depends on Mg(2+) as a cofactor. Mn(2+) serves as cofactor.

The protein resides in the plastid. It localises to the chloroplast. The enzyme catalyses dimethylallyl diphosphate = isoprene + diphosphate. It participates in secondary metabolite biosynthesis; terpenoid biosynthesis. Its activity is regulated as follows. Competitive inhibition is mediated by geranyl diphosphate (GPP). Functionally, lyase that catalyzes the formation of isoprene from dimethylallyl diphosphate via a syn-periplanar elimination mechanism in which the diphosphate-leaving group serves as a general base. The protein is Isoprene synthase, chloroplastic of Populus canescens (Grey poplar).